The chain runs to 418 residues: Putative FBD-associated F-box protein At5g56560 (418 aa).

The region spanning 4-60 is the F-box domain; that stretch reads QTRLSDLPDELLLKILSALPMFKVTLATRLISRRWKGPWKLVPDVTFDDDDIPFKSF. The FBD domain occupies 340–390; the sequence is LWEEPAVVAKCLSEHLEIFEWRQYEGTEQERNVAGYILANATCLKMATFST.

The sequence is that of Putative FBD-associated F-box protein At5g56560 from Arabidopsis thaliana (Mouse-ear cress).